The chain runs to 280 residues: Dolichyl-diphosphooligosaccharide--protein glycosyltransferase subunit 2 (280 aa).

An N-terminal signal peptide occupies residues 1–16 (MKLLLVLLTIASVALA). Over 17–187 (AVDDVAVNNF…FRQPEKRPSA (171 aa)) the chain is Lumenal. Residues 188 to 208 (LISDLFTIICLSPLLILVVLW) traverse the membrane as a helical segment. The Cytoplasmic portion of the chain corresponds to 209-222 (SQVGINFQNAPASP). A helical membrane pass occupies residues 223-243 (WVPIFHVGLIGIFGIYFMFWV). A topological domain (lumenal) is located at residue Q244. Residues 245–265 (FDMFVTLKYLAVLGFLTFVAG) traverse the membrane as a helical segment. The Cytoplasmic segment spans residues 266–280 (NRVLRAISESKQKSE).

The protein belongs to the SWP1 family. In terms of assembly, component of the oligosaccharyltransferase (OST) complex.

It localises to the endoplasmic reticulum membrane. Its pathway is protein modification; protein glycosylation. Its function is as follows. Subunit of the oligosaccharyl transferase (OST) complex that catalyzes the initial transfer of a defined glycan (Glc(3)Man(9)GlcNAc(2) in eukaryotes) from the lipid carrier dolichol-pyrophosphate to an asparagine residue within an Asn-X-Ser/Thr consensus motif in nascent polypeptide chains, the first step in protein N-glycosylation. N-glycosylation occurs cotranslationally and the complex associates with the Sec61 complex at the channel-forming translocon complex that mediates protein translocation across the endoplasmic reticulum (ER). All subunits are required for a maximal enzyme activity. The protein is Dolichyl-diphosphooligosaccharide--protein glycosyltransferase subunit 2 of Caenorhabditis elegans.